Here is a 211-residue protein sequence, read N- to C-terminus: Arginine exporter protein ArgO (211 aa).

Over M1 to M38 the chain is Cytoplasmic. A helical transmembrane segment spans residues I39 to G58. Residues S59 to M63 are Periplasmic-facing. A helical membrane pass occupies residues Q64 to A91. The Cytoplasmic segment spans residues M92 to E102. A helical transmembrane segment spans residues V103–F130. The Periplasmic portion of the chain corresponds to V131–L140. The chain crosses the membrane as a helical span at residues D141 to L170. At A171–R173 the chain is on the cytoplasmic side. A helical membrane pass occupies residues L174–R200. Residues D201 to S211 are Periplasmic-facing.

Belongs to the LysE/ArgO transporter (TC 2.A.75) family. Monomer.

The protein localises to the cell inner membrane. The catalysed reaction is L-arginine(in) = L-arginine(out). Functionally, involved in the export of arginine. Important to control the intracellular level of arginine and the correct balance between arginine and lysine. May also be involved in the export of canavanine (a plant-derived antimetabolite). This is Arginine exporter protein ArgO from Escherichia coli (strain K12).